We begin with the raw amino-acid sequence, 142 residues long: Large ribosomal subunit protein uL13 (142 aa).

Belongs to the universal ribosomal protein uL13 family. As to quaternary structure, part of the 50S ribosomal subunit.

Its function is as follows. This protein is one of the early assembly proteins of the 50S ribosomal subunit, although it is not seen to bind rRNA by itself. It is important during the early stages of 50S assembly. The chain is Large ribosomal subunit protein uL13 from Pseudomonas putida (strain W619).